A 264-amino-acid chain; its full sequence is Small ribosomal subunit protein uS2 (264 aa).

The span at 243–253 (IEAAEDGEEVD) shows a compositional bias: acidic residues. Positions 243-264 (IEAAEDGEEVDNAQLTSSQGRS) are disordered. Residues 255–264 (AQLTSSQGRS) are compositionally biased toward polar residues.

Belongs to the universal ribosomal protein uS2 family.

In Deinococcus geothermalis (strain DSM 11300 / CIP 105573 / AG-3a), this protein is Small ribosomal subunit protein uS2.